The primary structure comprises 1533 residues: Glycogen debranching enzyme (1533 aa).

A Phosphoserine modification is found at Ser-64. Residues Asp-527, His-530, and Asp-628 contribute to the active site.

The protein belongs to the glycogen debranching enzyme family. As to quaternary structure, monomer. Interacts with NHLRC1/malin. Post-translationally, ubiquitinated. In terms of tissue distribution, ubiquitous. Expressed in striated skeletal muscle, heart, liver, spleen, skin, spinal cord, lung, kidney and testicle.

The protein resides in the cytoplasm. It carries out the reaction Transfers a segment of a (1-&gt;4)-alpha-D-glucan to a new position in an acceptor, which may be glucose or a (1-&gt;4)-alpha-D-glucan.. It catalyses the reaction Hydrolysis of (1-&gt;6)-alpha-D-glucosidic branch linkages in glycogen phosphorylase limit dextrin.. Its function is as follows. Multifunctional enzyme acting as 1,4-alpha-D-glucan:1,4-alpha-D-glucan 4-alpha-D-glycosyltransferase and amylo-1,6-glucosidase in glycogen degradation. This chain is Glycogen debranching enzyme, found in Equus caballus (Horse).